Here is a 203-residue protein sequence, read N- to C-terminus: Small ribosomal subunit protein uS4 (203 aa).

Residues 93–153 (QRLDSLVYRL…DKSKNIVPIQ (61 aa)) enclose the S4 RNA-binding domain.

This sequence belongs to the universal ribosomal protein uS4 family. In terms of assembly, part of the 30S ribosomal subunit. Contacts protein S5. The interaction surface between S4 and S5 is involved in control of translational fidelity.

Its function is as follows. One of the primary rRNA binding proteins, it binds directly to 16S rRNA where it nucleates assembly of the body of the 30S subunit. Functionally, with S5 and S12 plays an important role in translational accuracy. The chain is Small ribosomal subunit protein uS4 from Leuconostoc citreum (strain KM20).